Here is a 426-residue protein sequence, read N- to C-terminus: RuvB-like protein 1 (426 aa).

62-69 is an ATP binding site; it reads GPVGSGKT.

This sequence belongs to the RuvB family. In terms of assembly, component of the SWR1 chromatin remodeling complex, the INO80 chromatin remodeling complex, and of the R2TP complex.

Its subcellular location is the nucleus. The enzyme catalyses ATP + H2O = ADP + phosphate + H(+). Functionally, DNA helicase which participates in several chromatin remodeling complexes, including the SWR1 and the INO80 complexes. The SWR1 complex mediates the ATP-dependent exchange of histone H2A for the H2A variant HZT1 leading to transcriptional regulation of selected genes by chromatin remodeling. The INO80 complex remodels chromatin by shifting nucleosomes and is involved in DNA repair. Also involved in pre-rRNA processing. This Encephalitozoon cuniculi (strain GB-M1) (Microsporidian parasite) protein is RuvB-like protein 1 (RVB1).